Here is a 365-residue protein sequence, read N- to C-terminus: DNA N6-methyl methyltransferase (365 aa).

This sequence belongs to the MT-A70-like family.

The catalysed reaction is a 2'-deoxyadenosine in DNA + S-adenosyl-L-methionine = an N(6)-methyl-2'-deoxyadenosine in DNA + S-adenosyl-L-homocysteine + H(+). In terms of biological role, methylates DNA on the 6th position of adenine (N(6)-methyladenosine). N(6)-methyladenosine (m6A) DNA is involved in epigenetic transgenerational inheritance. This chain is DNA N6-methyl methyltransferase, found in Caenorhabditis elegans.